A 423-amino-acid polypeptide reads, in one-letter code: Serine--tRNA ligase (423 aa).

L-serine is bound at residue 230–232 (TSE). Position 261 to 263 (261 to 263 (RSE)) interacts with ATP. Residue glutamate 284 coordinates L-serine. 348 to 351 (EISS) provides a ligand contact to ATP. Serine 384 provides a ligand contact to L-serine.

This sequence belongs to the class-II aminoacyl-tRNA synthetase family. Type-1 seryl-tRNA synthetase subfamily. As to quaternary structure, homodimer. The tRNA molecule binds across the dimer.

It localises to the cytoplasm. It catalyses the reaction tRNA(Ser) + L-serine + ATP = L-seryl-tRNA(Ser) + AMP + diphosphate + H(+). The catalysed reaction is tRNA(Sec) + L-serine + ATP = L-seryl-tRNA(Sec) + AMP + diphosphate + H(+). It functions in the pathway aminoacyl-tRNA biosynthesis; selenocysteinyl-tRNA(Sec) biosynthesis; L-seryl-tRNA(Sec) from L-serine and tRNA(Sec): step 1/1. Catalyzes the attachment of serine to tRNA(Ser). Is also able to aminoacylate tRNA(Sec) with serine, to form the misacylated tRNA L-seryl-tRNA(Sec), which will be further converted into selenocysteinyl-tRNA(Sec). The chain is Serine--tRNA ligase from Macrococcus caseolyticus (strain JCSC5402) (Macrococcoides caseolyticum).